The following is a 423-amino-acid chain: uncharacterized protein (423 aa).

It belongs to the mycobacterial PPE family.

Its function is as follows. Could be required for host endothelial-cell invasion and/or intracellular survival. This is an uncharacterized protein from Mycobacterium tuberculosis (strain CDC 1551 / Oshkosh).